Reading from the N-terminus, the 533-residue chain is Lysine--tRNA ligase (533 aa).

A 'HIGH' region motif is present at residues 28-36 (PSGHIHIGN). A 'KMSKS' region motif is present at residues 278–282 (PMSSS).

Belongs to the class-I aminoacyl-tRNA synthetase family.

Its subcellular location is the cytoplasm. The catalysed reaction is tRNA(Lys) + L-lysine + ATP = L-lysyl-tRNA(Lys) + AMP + diphosphate. This chain is Lysine--tRNA ligase (lysS), found in Methanococcus maripaludis (strain DSM 14266 / JCM 13030 / NBRC 101832 / S2 / LL).